A 259-amino-acid polypeptide reads, in one-letter code: Ribonuclease HII (259 aa).

In terms of domain architecture, RNase H type-2 spans 70–258 (TLIVGIDEVG…VKSLVLGKKE (189 aa)). 3 residues coordinate a divalent metal cation: Asp76, Glu77, and Asp168.

It belongs to the RNase HII family. Requires Mn(2+) as cofactor. It depends on Mg(2+) as a cofactor.

The protein resides in the cytoplasm. It carries out the reaction Endonucleolytic cleavage to 5'-phosphomonoester.. Functionally, endonuclease that specifically degrades the RNA of RNA-DNA hybrids. This is Ribonuclease HII from Streptococcus pneumoniae (strain ATCC 700669 / Spain 23F-1).